Consider the following 466-residue polypeptide: 3-isopropylmalate dehydratase large subunit (466 aa).

[4Fe-4S] cluster-binding residues include Cys-347, Cys-407, and Cys-410.

Belongs to the aconitase/IPM isomerase family. LeuC type 1 subfamily. As to quaternary structure, heterodimer of LeuC and LeuD. [4Fe-4S] cluster serves as cofactor.

It catalyses the reaction (2R,3S)-3-isopropylmalate = (2S)-2-isopropylmalate. It functions in the pathway amino-acid biosynthesis; L-leucine biosynthesis; L-leucine from 3-methyl-2-oxobutanoate: step 2/4. Its function is as follows. Catalyzes the isomerization between 2-isopropylmalate and 3-isopropylmalate, via the formation of 2-isopropylmaleate. This Vibrio vulnificus (strain YJ016) protein is 3-isopropylmalate dehydratase large subunit.